We begin with the raw amino-acid sequence, 383 residues long: Teichoic acid glycerol-phosphate primase (383 aa).

It belongs to the CDP-glycerol glycerophosphotransferase family.

It is found in the cell membrane. The catalysed reaction is N-acetyl-beta-D-mannosaminyl-(1-&gt;4)-N-acetyl-alpha-D-glucosaminyl di-trans,octa-cis-undecaprenyl diphosphate + CDP-glycerol = 4-O-[(2R)-glycerylphospho]-N-acetyl-beta-D-mannosaminyl-(1-&gt;4)-N-acetyl-alpha-D-glucosaminyl di-trans,octa-cis-undecaprenyl diphosphate + CMP + H(+). It functions in the pathway cell wall biogenesis; poly(ribitol phosphate) teichoic acid biosynthesis. In terms of biological role, catalyzes the addition of a single glycerol phosphate residue to the prenoldiphosphate-linked disaccharide. This is Teichoic acid glycerol-phosphate primase (tarB) from Bacillus spizizenii (strain ATCC 23059 / NRRL B-14472 / W23) (Bacillus subtilis subsp. spizizenii).